The sequence spans 388 residues: Serine/threonine-protein phosphatase sitA (388 aa).

D67 and H69 together coordinate Mn(2+). The tract at residues 86-146 (PDGSEAEAPK…SQRDRSSSSG (61 aa)) is disordered. Residues D161 and N193 each coordinate Mn(2+). H194 (proton donor) is an active-site residue. Mn(2+) contacts are provided by H243 and H317.

This sequence belongs to the PPP phosphatase family. PP-6 (PP-V) subfamily. Requires Mn(2+) as cofactor.

The enzyme catalyses O-phospho-L-threonyl-[protein] + H2O = L-threonyl-[protein] + phosphate. In terms of biological role, protein phosphatase that acts as a modulator of pkcA/mpkA activity involved in the cell wall integrity pathway. Plays an important role in regulation of adhesion, cell wall integrity, biofilm formation, and virulence. This is Serine/threonine-protein phosphatase sitA from Aspergillus fumigatus (strain ATCC MYA-4609 / CBS 101355 / FGSC A1100 / Af293) (Neosartorya fumigata).